The following is a 1265-amino-acid chain: Dynactin subunit 1 (1265 aa).

In terms of domain architecture, CAP-Gly spans 27–69; it reads GMTSFAVGKWVGVVLDEPKGKNSGSIKGQQYFQCDENCGMFVR. The tract at residues 81–179 is disordered; sequence GSRRSIEDVS…GNGAASHASS (99 aa). Ser85, Ser110, Ser114, Ser117, and Ser121 each carry phosphoserine. 2 stretches are compositionally biased toward low complexity: residues 103–138 and 161–177; these read RLSS…SSSS and AEGA…ASHA. A Phosphoserine modification is found at Ser183. Coiled coils occupy residues 213–570, 812–836, and 967–1084; these read NSGA…ESLQ, LIQF…RLPS, and QRAQ…NSTT. Residues 1082 to 1106 are disordered; sequence STTGKVQPGSESHSPHNISLSGNTS. Ser1117 is subject to Phosphoserine. Residues 1128-1160 are a coiled coil; sequence EEVELLKNAFNQERNQRLRLQAQDMRAKLSQFE.

The protein belongs to the dynactin 150 kDa subunit family. As to quaternary structure, monomer and homodimer. Subunit of dynactin, a multiprotein complex part of a tripartite complex with dynein and a adapter, such as BICDL1, BICD2 or HOOK3. The dynactin complex is built around ACTR1A/ACTB filament and consists of an actin-related filament composed of a shoulder domain, a pointed end and a barbed end. Its length is defined by its flexible shoulder domain. The soulder is composed of 2 DCTN1 subunits, 4 DCTN2 and 2 DCTN3. DCTN1/p150(glued) binds directly to microtubules and to cytoplasmic dynein.

It is found in the cytoplasm. The protein resides in the cytoskeleton. In terms of biological role, part of the dynactin complex that activates the molecular motor dynein for ultra-processive transport along microtubules. Plays a key role in dynein-mediated retrograde transport of vesicles and organelles along microtubules by recruiting and tethering dynein to microtubules. Binds to both dynein and microtubules providing a link between specific cargos, microtubules and dynein. Essential for targeting dynein to microtubule plus ends, recruiting dynein to membranous cargos and enhancing dynein processivity (the ability to move along a microtubule for a long distance without falling off the track). Can also act as a brake to slow the dynein motor during motility along the microtubule. Can regulate microtubule stability by promoting microtubule formation, nucleation and polymerization and by inhibiting microtubule catastrophe in neurons. Inhibits microtubule catastrophe by binding both to microtubules and to tubulin, leading to enhanced microtubule stability along the axon. Plays a role in metaphase spindle orientation. Plays a role in centriole cohesion and subdistal appendage organization and function. Its recruitment to the centriole in a KIF3A-dependent manner is essential for the maintenance of centriole cohesion and the formation of subdistal appendage. Also required for microtubule anchoring at the mother centriole. Plays a role in primary cilia formation. This Drosophila melanogaster (Fruit fly) protein is Dynactin subunit 1.